Here is a 54-residue protein sequence, read N- to C-terminus: Large ribosomal subunit protein bL33 (54 aa).

The protein belongs to the bacterial ribosomal protein bL33 family.

This chain is Large ribosomal subunit protein bL33, found in Frankia alni (strain DSM 45986 / CECT 9034 / ACN14a).